The chain runs to 420 residues: Histidine--tRNA ligase (420 aa).

This sequence belongs to the class-II aminoacyl-tRNA synthetase family. Homodimer.

It is found in the cytoplasm. It carries out the reaction tRNA(His) + L-histidine + ATP = L-histidyl-tRNA(His) + AMP + diphosphate + H(+). This chain is Histidine--tRNA ligase, found in Thermodesulfovibrio yellowstonii (strain ATCC 51303 / DSM 11347 / YP87).